The sequence spans 444 residues: MTKTYYFIGIKGTGMGPLAQILHDQGNTVLGSDIDSYTYTQAPLEAAGIKILPFSADNVDRYADAIFVRGNAFNDDHVEVQRALTLGVKMISYPDAVQEQIAQTTSIAVAGAHGKTSTTGLLAHVVKNIAPTSYLIGDGTGRGVPNSQFFVVEADEYRRHFKDYAPDYAILTNIDFDHPDYYEDINDVTRAFSDFANHVKKDIFAWGDDPYLRLLQPKADVYYYGTNSEQDDFVATNIRKSTQGSHFDVVFRGQSLGEFSVPLFGQHSILNALSVIAVAYMEKMDLSLIKSFLMTYQGVKRRFSEKQIADITVIDDYAHHPTEIDATLDAARQKYPNKQIIAIFQPHTYSRVIAYKDEFAKSLEAADKVYLANIFGSAREKQGAVTSAEIGAEISKFGGIIEEDNMSLLMPYENAVMVFMGAGDIEKYEFAYEKLLGQLRTDLQ.

Position 111–117 (G111–S117) interacts with ATP.

The protein belongs to the MurCDEF family.

It is found in the cytoplasm. It catalyses the reaction UDP-N-acetyl-alpha-D-muramate + L-alanine + ATP = UDP-N-acetyl-alpha-D-muramoyl-L-alanine + ADP + phosphate + H(+). It participates in cell wall biogenesis; peptidoglycan biosynthesis. Functionally, cell wall formation. The sequence is that of UDP-N-acetylmuramate--L-alanine ligase from Leuconostoc citreum (strain KM20).